The chain runs to 325 residues: Tagatose 1,6-diphosphate aldolase 1 (325 aa).

Belongs to the aldolase LacD family.

The enzyme catalyses D-tagatofuranose 1,6-bisphosphate = D-glyceraldehyde 3-phosphate + dihydroxyacetone phosphate. The protein operates within carbohydrate metabolism; D-tagatose 6-phosphate degradation; D-glyceraldehyde 3-phosphate and glycerone phosphate from D-tagatose 6-phosphate: step 2/2. This is Tagatose 1,6-diphosphate aldolase 1 (lacD1) from Enterococcus faecalis (strain ATCC 700802 / V583).